The chain runs to 452 residues: Exodeoxyribonuclease 7 large subunit (452 aa).

Belongs to the XseA family. Heterooligomer composed of large and small subunits.

The protein localises to the cytoplasm. The catalysed reaction is Exonucleolytic cleavage in either 5'- to 3'- or 3'- to 5'-direction to yield nucleoside 5'-phosphates.. In terms of biological role, bidirectionally degrades single-stranded DNA into large acid-insoluble oligonucleotides, which are then degraded further into small acid-soluble oligonucleotides. This Bacillus cereus (strain B4264) protein is Exodeoxyribonuclease 7 large subunit.